Reading from the N-terminus, the 212-residue chain is Peptide methionine sulfoxide reductase MsrA (212 aa).

Residue C52 is part of the active site.

Belongs to the MsrA Met sulfoxide reductase family.

It catalyses the reaction L-methionyl-[protein] + [thioredoxin]-disulfide + H2O = L-methionyl-(S)-S-oxide-[protein] + [thioredoxin]-dithiol. It carries out the reaction [thioredoxin]-disulfide + L-methionine + H2O = L-methionine (S)-S-oxide + [thioredoxin]-dithiol. Its function is as follows. Has an important function as a repair enzyme for proteins that have been inactivated by oxidation. Catalyzes the reversible oxidation-reduction of methionine sulfoxide in proteins to methionine. This chain is Peptide methionine sulfoxide reductase MsrA, found in Salmonella paratyphi A (strain AKU_12601).